We begin with the raw amino-acid sequence, 113 residues long: Cell cycle control protein 50C (113 aa).

Topologically, residues 1–34 (MEERAQHCLSRLLDNSALKQQELPIHRLYFTARR) are cytoplasmic. A helical membrane pass occupies residues 35-55 (VLFVFFATGIFCLCMGIILIL). The Extracellular portion of the chain corresponds to 56–113 (SARSTQEIEINYTRICANCAKLRENASNFDKECTCSIPFYLSGKMMVGEIQETRLTLH). N-linked (GlcNAc...) asparagine glycosylation is present at asparagine 66.

This sequence belongs to the CDC50/LEM3 family. As to expression, specifically expressed in testis.

Its subcellular location is the membrane. The chain is Cell cycle control protein 50C from Homo sapiens (Human).